The primary structure comprises 194 residues: uncharacterized protein (194 aa).

This is an uncharacterized protein from Methanocaldococcus jannaschii (strain ATCC 43067 / DSM 2661 / JAL-1 / JCM 10045 / NBRC 100440) (Methanococcus jannaschii).